A 93-amino-acid polypeptide reads, in one-letter code: Acylphosphatase (93 aa).

One can recognise an Acylphosphatase-like domain in the interval 5–91 (RAHFLVKGFV…RGETTFRIRS (87 aa)). Catalysis depends on residues Arg-20 and Asn-38.

This sequence belongs to the acylphosphatase family.

The catalysed reaction is an acyl phosphate + H2O = a carboxylate + phosphate + H(+). The chain is Acylphosphatase (acyP) from Moorella thermoacetica (strain ATCC 39073 / JCM 9320).